A 339-amino-acid polypeptide reads, in one-letter code: Immunoglobulin-binding protein 1 (339 aa).

The residue at position 2 (A2) is an N-acetylalanine. In terms of domain architecture, UIM spans 46-60 (LDLLEKAAEMLSQLD). The interaction with PPP2CA stretch occupies residues 98–202 (RLDHLQRARE…YLLHLQRWID (105 aa)). 2 disordered regions span residues 221–243 (RDSSREASTSNSSRQERPPVKPF) and 289–339 (APEE…QNMG). The interaction with MID1 stretch occupies residues 225–290 (REASTSNSSR…PDQGIAKAAP (66 aa)). N6-acetyllysine is present on K241. Residues 301 to 312 (EEQEEKEEEDDE) show a composition bias toward acidic residues. The segment covering 313–329 (QTLHRAREWDDWKDTHP) has biased composition (basic and acidic residues).

Belongs to the IGBP1/TAP42 family. Interacts with partially folded PPP2CA, but not with the fully active protein. Interacts with PPP2CB, and with PP4 and PP6. Interacts with MID1 and MID2. Interacts with ubiquitin. In terms of processing, phosphorylated. Post-translationally, monoubiquitination by MID1 triggers calpain-mediated cleavage and switches IGBP1 activity from protective to destructive. Ubiquitously expressed with highest levels in heart, skeletal muscle and pancreas.

The protein localises to the cytoplasm. In terms of biological role, associated to surface IgM-receptor; may be involved in signal transduction. Involved in regulation of the catalytic activity of the phosphatases PP2A, PP4 and PP6 by protecting their partially folded catalytic subunits from degradative polyubiquitination until they associate with regulatory subunits. This is Immunoglobulin-binding protein 1 (IGBP1) from Homo sapiens (Human).